Here is a 472-residue protein sequence, read N- to C-terminus: Mothers against decapentaplegic homolog 1 (472 aa).

The MH1 domain maps to 12–136 (PAVKRLLGWK…YKRVDSPVLP (125 aa)). Zn(2+) is bound by residues C64, C109, C121, and H126. The interval 158-238 (NPLHQTEPPM…PPPAYMPPEE (81 aa)) is disordered. Polar residues predominate over residues 169–182 (QNATFPDSFPQQPA). Low complexity predominate over residues 188-226 (TPNSPTNSYPSSPNSGTGSTATFPHSPSSSDPGSPFQMP). Over residues 227–238 (ETPPPAYMPPEE) the composition is skewed to pro residues. Residues 278 to 472 (WCSIVYYELN…SPHNPISSVS (195 aa)) enclose the MH2 domain.

This sequence belongs to the dwarfin/SMAD family. As to quaternary structure, may form trimers with another Smad1 and the co-Smad Smad4.

Its subcellular location is the cytoplasm. It localises to the nucleus. Involved in ventralization. May mediate Bmp2b signaling during embryonic dorsal-ventral pattern formation, and may itself be a transcriptional target for Smad5-mediated Bmp2b signaling. In Danio rerio (Zebrafish), this protein is Mothers against decapentaplegic homolog 1 (smad1).